Consider the following 286-residue polypeptide: D-tagatose-1,6-bisphosphate aldolase subunit KbaY (286 aa).

Catalysis depends on aspartate 82, which acts as the Proton donor. Residues histidine 83 and histidine 180 each contribute to the Zn(2+) site. Glycine 181 is a binding site for dihydroxyacetone phosphate. Histidine 208 provides a ligand contact to Zn(2+). Residues 209–211 (GAS) and 230–233 (NVAT) contribute to the dihydroxyacetone phosphate site.

The protein belongs to the class II fructose-bisphosphate aldolase family. TagBP aldolase KbaY subfamily. In terms of assembly, homotetramer. Forms a complex with KbaZ. Zn(2+) is required as a cofactor.

It carries out the reaction D-tagatofuranose 1,6-bisphosphate = D-glyceraldehyde 3-phosphate + dihydroxyacetone phosphate. It participates in carbohydrate metabolism; D-tagatose 6-phosphate degradation; D-glyceraldehyde 3-phosphate and glycerone phosphate from D-tagatose 6-phosphate: step 2/2. Catalytic subunit of the tagatose-1,6-bisphosphate aldolase KbaYZ, which catalyzes the reversible aldol condensation of dihydroxyacetone phosphate (DHAP or glycerone-phosphate) with glyceraldehyde 3-phosphate (G3P) to produce tagatose 1,6-bisphosphate (TBP). Requires KbaZ subunit for full activity and stability. The chain is D-tagatose-1,6-bisphosphate aldolase subunit KbaY from Escherichia coli O17:K52:H18 (strain UMN026 / ExPEC).